A 1104-amino-acid chain; its full sequence is Receptor-type guanylate cyclase gcy-15 (1104 aa).

The Extracellular segment spans residues 1–431; that stretch reads MEIAINRLNA…ENCGPPANNT (431 aa). N43, N237, N263, N287, N407, and N429 each carry an N-linked (GlcNAc...) asparagine glycan. Residues 432–452 traverse the membrane as a helical segment; sequence FIIVISVGVAVLIGLAIAAAF. The Cytoplasmic segment spans residues 453 to 1104; that stretch reads LYKRYRYERR…QIQEKTYEFS (652 aa). The Protein kinase domain maps to 528–823; the sequence is FNTGSTARAG…QIKRKLKPLT (296 aa). ATP-binding positions include 534 to 542 and K576; that span reads ARAGPFGPI. The stretch at 838 to 871 forms a coiled coil; sequence IEKYTDKLEKDIAERNEELEAEKAKSEALLKMML. A Guanylate cyclase domain is found at 894-1024; the sequence is TVFFSDCPGF…DTVNTASRME (131 aa).

This sequence belongs to the adenylyl cyclase class-4/guanylyl cyclase family. In terms of tissue distribution, expressed bilaterally in ASG sensory neurons.

It localises to the cell membrane. It catalyses the reaction GTP = 3',5'-cyclic GMP + diphosphate. Functionally, guanylate cyclase involved in the production of the second messenger cGMP. This is Receptor-type guanylate cyclase gcy-15 from Caenorhabditis elegans.